Reading from the N-terminus, the 293-residue chain is Movement protein BC1 (293 aa).

This sequence belongs to the begomovirus movement protein BC1 family. In terms of assembly, binds to dimeric supercoiled plasmid DNA. In terms of processing, phosphorylated.

The protein resides in the host cell membrane. It is found in the host microsome membrane. The protein localises to the host endoplasmic reticulum membrane. Transports viral genome to neighboring plant cells directly through plasmosdesmata, without any budding. The movement protein allows efficient cell to cell propagation, by bypassing the host cell wall barrier. Begomovirus genome is shuttled out of nucleus by Nuclear shuttle protein (NSP) and the movement protein transports the DNA-NSP complex to cell plasmodesmata and facilitates further movement across the cell wall. The polypeptide is Movement protein BC1 (Cucurbita moschata (Winter crookneck squash)).